The chain runs to 203 residues: Molybdenum cofactor guanylyltransferase (203 aa).

Residues Leu-12 to Gly-14, Lys-25, Asn-53, Asp-71, and Asp-101 each bind GTP. Asp-101 contacts Mg(2+).

The protein belongs to the MobA family. In terms of assembly, monomer. Requires Mg(2+) as cofactor.

The protein resides in the cytoplasm. It carries out the reaction Mo-molybdopterin + GTP + H(+) = Mo-molybdopterin guanine dinucleotide + diphosphate. Its function is as follows. Transfers a GMP moiety from GTP to Mo-molybdopterin (Mo-MPT) cofactor (Moco or molybdenum cofactor) to form Mo-molybdopterin guanine dinucleotide (Mo-MGD) cofactor. In Methylibium petroleiphilum (strain ATCC BAA-1232 / LMG 22953 / PM1), this protein is Molybdenum cofactor guanylyltransferase.